The chain runs to 367 residues: WAT1-related protein At3g28050 (367 aa).

Transmembrane regions (helical) follow at residues 10–30, 40–60, 73–93, 103–123, 142–162, 179–199, 211–231, 246–266, 276–296, and 301–321; these read VLPVTALVIMECANVGLNTLF, FHVFIVYSYGLAALLLLPSLF, FSILYKIVLLGIIGCCSNIMG, TLASAISNLTPAFTFLLAVVF, TVVSIGGAFIVTLYNGPVVIA, WILGAGFLAVEYFCVPLWYIV, FTVVCFYSIGVSFWTALVTLF, IALVSIVCSGLFGSCINNTIH, LFVAMFKPLSIAIAVAMGVIF, and LYIGSLIGATVITIGFYTVMW. EamA domains are found at residues 25–153 and 195–319; these read GLNT…FIVT and LWYI…FYTV. The disordered stretch occupies residues 338–367; the sequence is HEEANEADLDSPSGSQKAPLLESYKNDEHV.

The protein belongs to the drug/metabolite transporter (DMT) superfamily. Plant drug/metabolite exporter (P-DME) (TC 2.A.7.4) family.

It localises to the membrane. In Arabidopsis thaliana (Mouse-ear cress), this protein is WAT1-related protein At3g28050.